Consider the following 180-residue polypeptide: Large ribosomal subunit protein uL5 (180 aa).

This sequence belongs to the universal ribosomal protein uL5 family. Part of the 50S ribosomal subunit; part of the 5S rRNA/L5/L18/L25 subcomplex. Contacts the 5S rRNA and the P site tRNA. Forms a bridge to the 30S subunit in the 70S ribosome.

This is one of the proteins that bind and probably mediate the attachment of the 5S RNA into the large ribosomal subunit, where it forms part of the central protuberance. In the 70S ribosome it contacts protein S13 of the 30S subunit (bridge B1b), connecting the 2 subunits; this bridge is implicated in subunit movement. Contacts the P site tRNA; the 5S rRNA and some of its associated proteins might help stabilize positioning of ribosome-bound tRNAs. In Oenococcus oeni (strain ATCC BAA-331 / PSU-1), this protein is Large ribosomal subunit protein uL5.